We begin with the raw amino-acid sequence, 43 residues long: Delta/kappa-actitoxin-Avd4a (43 aa).

Disulfide bonds link cysteine 4/cysteine 39, cysteine 6/cysteine 32, and cysteine 22/cysteine 40.

It belongs to the sea anemone type 3 (BDS) potassium channel toxin family.

It localises to the secreted. The protein localises to the nematocyst. In terms of biological role, acts as a gating modifier on both Kv and Nav ion channels, and also acts on blood pressure. Voltage-dependently inhibits voltage-gated potassium channels Kv3 (Kv3.1/KCNC1, Kv3.2/KCNC2 and Kv3.4/KCNC4) and slows inactivation of the voltage-gated sodium channel Nav1.7/SCN9A. Inhibits all Kv3.1, Kv3.2 and Kv3.4 by about 50% when tested at a voltage of +40 mV (45%, 48% and 56%, respectively). May act by binding residues in voltage-sensing domains S3b and S4 of Kv3. On sodium channel, tests have been done on human Nav1.7/SCN9A (expressed in HEK293 cells) (EC(50)=3 nM) and rat SCG neurons that mostly carry Nav1.7 channels (EC(50)=300 nM). This toxin also reduces blood pressure. In Anemonia sulcata (Mediterranean snakelocks sea anemone), this protein is Delta/kappa-actitoxin-Avd4a.